A 1041-amino-acid chain; its full sequence is Beta-galactosidase (1041 aa).

The substrate site is built by N103 and D201. D201 contacts Na(+). Mg(2+)-binding residues include E415, H417, and E460. Substrate-binding positions include E460 and 536 to 539 (EYAH). E460 functions as the Proton donor in the catalytic mechanism. The active-site Nucleophile is the E536. N596 contacts Mg(2+). 2 residues coordinate Na(+): F600 and N603. Substrate-binding residues include N603 and W1016.

It belongs to the glycosyl hydrolase 2 family. In terms of assembly, homotetramer. It depends on Mg(2+) as a cofactor. Requires Na(+) as cofactor.

It catalyses the reaction Hydrolysis of terminal non-reducing beta-D-galactose residues in beta-D-galactosides.. The polypeptide is Beta-galactosidase (Alteromonas mediterranea (strain DSM 17117 / CIP 110805 / LMG 28347 / Deep ecotype)).